Reading from the N-terminus, the 362-residue chain is Cobalt-precorrin-5B C(1)-methyltransferase (362 aa).

The protein belongs to the CbiD family.

It catalyses the reaction Co-precorrin-5B + S-adenosyl-L-methionine = Co-precorrin-6A + S-adenosyl-L-homocysteine. Its pathway is cofactor biosynthesis; adenosylcobalamin biosynthesis; cob(II)yrinate a,c-diamide from sirohydrochlorin (anaerobic route): step 6/10. Catalyzes the methylation of C-1 in cobalt-precorrin-5B to form cobalt-precorrin-6A. This Burkholderia vietnamiensis (strain G4 / LMG 22486) (Burkholderia cepacia (strain R1808)) protein is Cobalt-precorrin-5B C(1)-methyltransferase.